A 776-amino-acid polypeptide reads, in one-letter code: Methionine--tRNA ligase (776 aa).

A 'HIGH' region motif is present at residues 10–20 (PYSNGPIHLGH). 4 residues coordinate Zn(2+): cysteine 143, cysteine 146, cysteine 156, and cysteine 159. The 'KMSKS' region motif lies at 375–379 (KFSKS). Residue lysine 378 coordinates ATP. Positions 676–776 (DFAKLDMRVG…KPISLGSKVR (101 aa)) constitute a tRNA-binding domain.

This sequence belongs to the class-I aminoacyl-tRNA synthetase family. MetG type 1 subfamily. As to quaternary structure, homodimer. Requires Zn(2+) as cofactor.

The protein localises to the cytoplasm. The enzyme catalyses tRNA(Met) + L-methionine + ATP = L-methionyl-tRNA(Met) + AMP + diphosphate. In terms of biological role, is required not only for elongation of protein synthesis but also for the initiation of all mRNA translation through initiator tRNA(fMet) aminoacylation. The sequence is that of Methionine--tRNA ligase (metG) from Nanoarchaeum equitans (strain Kin4-M).